Reading from the N-terminus, the 32-residue chain is MLTITSYVGLLFTALGFTLGLYFGLTKVVKLI.

A helical membrane pass occupies residues 4–26; that stretch reads ITSYVGLLFTALGFTLGLYFGLT.

This sequence belongs to the PetL family. The 4 large subunits of the cytochrome b6-f complex are cytochrome b6, subunit IV (17 kDa polypeptide, PetD), cytochrome f and the Rieske protein, while the 4 small subunits are PetG, PetL, PetM and PetN. The complex functions as a dimer.

The protein localises to the plastid. It localises to the chloroplast thylakoid membrane. In terms of biological role, component of the cytochrome b6-f complex, which mediates electron transfer between photosystem II (PSII) and photosystem I (PSI), cyclic electron flow around PSI, and state transitions. PetL is important for photoautotrophic growth as well as for electron transfer efficiency and stability of the cytochrome b6-f complex. This Tetradesmus obliquus (Green alga) protein is Cytochrome b6-f complex subunit 6.